A 339-amino-acid chain; its full sequence is Dihydroorotase (339 aa).

2 residues coordinate Zn(2+): His12 and His14. Residues 14–16 (HVR) and Asn40 each bind substrate. Lys94, His133, His167, and Asp239 together coordinate Zn(2+). Lys94 bears the N6-carboxylysine mark. His133 is a substrate binding site. Asp239 is an active-site residue. Residues His243 and Ala255 each coordinate substrate.

It belongs to the metallo-dependent hydrolases superfamily. DHOase family. Class II DHOase subfamily. As to quaternary structure, homodimer. Requires Zn(2+) as cofactor.

It catalyses the reaction (S)-dihydroorotate + H2O = N-carbamoyl-L-aspartate + H(+). It participates in pyrimidine metabolism; UMP biosynthesis via de novo pathway; (S)-dihydroorotate from bicarbonate: step 3/3. Catalyzes the reversible cyclization of carbamoyl aspartate to dihydroorotate. This Helicobacter pylori (strain ATCC 700392 / 26695) (Campylobacter pylori) protein is Dihydroorotase.